Consider the following 225-residue polypeptide: Cytidylate kinase (225 aa).

11–19 contributes to the ATP binding site; it reads GPAAAGKST.

Belongs to the cytidylate kinase family. Type 1 subfamily.

It localises to the cytoplasm. The catalysed reaction is CMP + ATP = CDP + ADP. It carries out the reaction dCMP + ATP = dCDP + ADP. This Bacillus cereus (strain AH187) protein is Cytidylate kinase.